Reading from the N-terminus, the 79-residue chain is Small ribosomal subunit protein bS16 (79 aa).

The protein belongs to the bacterial ribosomal protein bS16 family.

In Oleidesulfovibrio alaskensis (strain ATCC BAA-1058 / DSM 17464 / G20) (Desulfovibrio alaskensis), this protein is Small ribosomal subunit protein bS16.